Consider the following 275-residue polypeptide: tRNA (guanine-N(7)-)-methyltransferase (275 aa).

The tract at residues 1-73 (MRHHGRMHAR…GGQQDTWERL (73 aa)) is disordered. Residues 46 to 59 (AHRHRRVTSFRSRR) show a composition bias toward basic residues. Residues Glu107, Glu132, Asp159, and Asp182 each contribute to the S-adenosyl-L-methionine site. Asp182 is an active-site residue. Residues Lys186, Asp218, and 254-257 (TKYE) contribute to the substrate site.

Belongs to the class I-like SAM-binding methyltransferase superfamily. TrmB family.

The catalysed reaction is guanosine(46) in tRNA + S-adenosyl-L-methionine = N(7)-methylguanosine(46) in tRNA + S-adenosyl-L-homocysteine. Its pathway is tRNA modification; N(7)-methylguanine-tRNA biosynthesis. Its function is as follows. Catalyzes the formation of N(7)-methylguanine at position 46 (m7G46) in tRNA. This is tRNA (guanine-N(7)-)-methyltransferase from Mycobacterium sp. (strain KMS).